We begin with the raw amino-acid sequence, 228 residues long: Translin (228 aa).

The DNA/RNA binding stretch occupies residues 86–90 (RFHEH). The tract at residues 177–198 (LDSGFRLLNLKNDSLRKRYDGL) is leucine-zipper. K187 carries the post-translational modification N6-acetyllysine. Position 190 is a phosphoserine (S190). K199 bears the N6-acetyllysine mark.

Belongs to the translin family. As to quaternary structure, ring-shaped heterooctamer of six TSN and two TSNAX subunits, DNA/RNA binding occurs inside the ring.

It is found in the cytoplasm. The protein localises to the nucleus. In terms of biological role, DNA-binding protein that specifically recognizes consensus sequences at the breakpoint junctions in chromosomal translocations, mostly involving immunoglobulin (Ig)/T-cell receptor gene segments. Seems to recognize single-stranded DNA ends generated by staggered breaks occurring at recombination hot spots. Its function is as follows. Exhibits both single-stranded and double-stranded endoribonuclease activity. May act as an activator of RNA-induced silencing complex (RISC) by facilitating endonucleolytic cleavage of the siRNA passenger strand. This chain is Translin (TSN), found in Pongo abelii (Sumatran orangutan).